The following is a 71-amino-acid chain: MQKDIHPNYQEITATCSCGNVIKTRSTVGHDLNLDVCGACHPFYTGKQRVVDTGGRVDRFNKRFSIPVGKK.

Zn(2+) is bound by residues Cys16, Cys18, Cys37, and Cys40.

This sequence belongs to the bacterial ribosomal protein bL31 family. Type A subfamily. Part of the 50S ribosomal subunit. It depends on Zn(2+) as a cofactor.

Functionally, binds the 23S rRNA. The protein is Large ribosomal subunit protein bL31 of Sodalis glossinidius (strain morsitans).